Reading from the N-terminus, the 379-residue chain is Flagellin A (379 aa).

Coiled coils occupy residues 103 to 128 (TNSA…RIAE) and 302 to 341 (YVDS…IKDT).

The protein belongs to the bacterial flagellin family. In terms of assembly, heteromer of multiple flagellin subunits including FlaA, FlaB, FlaC, FlaD and possibly FlaE.

The protein localises to the secreted. It is found in the bacterial flagellum. Functionally, flagellin is the subunit protein which polymerizes to form the filaments of bacterial flagella. FlaA is essential for flagellar synthesis and full motility. Important for virulence at two different levels: is needed for crossing the fish integument and may play a role once the bacterium has entered the host. The polypeptide is Flagellin A (flaA) (Vibrio anguillarum (Listonella anguillarum)).